The following is a 299-amino-acid chain: Probable lipid kinase YegS-like (299 aa).

The 129-residue stretch at 1–129 folds into the DAGKc domain; sequence MSERKALLIL…IDLGEVGGQM (129 aa). Residues threonine 39, 65–71, and threonine 92 contribute to the ATP site; that span reads GDGTLRD. The Mg(2+) site is built by leucine 210, aspartate 213, and leucine 215. Glutamate 268 (proton acceptor) is an active-site residue.

The protein belongs to the diacylglycerol/lipid kinase family. YegS lipid kinase subfamily. Mg(2+) is required as a cofactor. The cofactor is Ca(2+).

The protein localises to the cytoplasm. Probably phosphorylates lipids; the in vivo substrate is unknown. The sequence is that of Probable lipid kinase YegS-like from Pseudomonas fluorescens (strain ATCC BAA-477 / NRRL B-23932 / Pf-5).